Consider the following 134-residue polypeptide: Galectin-1 (134 aa).

Residue Ala-1 is modified to N-acetylalanine. Positions 4–134 (GVAVTNLNLK…GLAFKSITTE (131 aa)) constitute a Galectin domain. A beta-D-galactoside-binding positions include 45 to 49 (HFNAR), His-53, Asn-62, and 69 to 72 (WGSE).

Homodimer.

It localises to the secreted. The protein resides in the extracellular space. Its subcellular location is the extracellular matrix. Functionally, may regulate cell apoptosis and cell differentiation. Binds beta-galactoside and a wide array of complex carbohydrates. This is Galectin-1 from Rhinella arenarum (Argentine common toad).